The primary structure comprises 259 residues: 5'-nucleotidase SurE (259 aa).

A divalent metal cation contacts are provided by D8, D9, S40, and N92.

This sequence belongs to the SurE nucleotidase family. A divalent metal cation serves as cofactor.

Its subcellular location is the cytoplasm. It catalyses the reaction a ribonucleoside 5'-phosphate + H2O = a ribonucleoside + phosphate. Nucleotidase that shows phosphatase activity on nucleoside 5'-monophosphates. The protein is 5'-nucleotidase SurE of Xanthomonas axonopodis pv. citri (strain 306).